Here is a 389-residue protein sequence, read N- to C-terminus: Lipid-A-disaccharide synthase (389 aa).

The protein belongs to the LpxB family.

The catalysed reaction is a lipid X + a UDP-2-N,3-O-bis[(3R)-3-hydroxyacyl]-alpha-D-glucosamine = a lipid A disaccharide + UDP + H(+). Its pathway is bacterial outer membrane biogenesis; LPS lipid A biosynthesis. Its function is as follows. Condensation of UDP-2,3-diacylglucosamine and 2,3-diacylglucosamine-1-phosphate to form lipid A disaccharide, a precursor of lipid A, a phosphorylated glycolipid that anchors the lipopolysaccharide to the outer membrane of the cell. The sequence is that of Lipid-A-disaccharide synthase from Verminephrobacter eiseniae (strain EF01-2).